Here is a 654-residue protein sequence, read N- to C-terminus: Threonine--tRNA ligase (654 aa).

In terms of domain architecture, TGS spans 1–63; that stretch reads MAQISLTFPD…DADASIAIHT (63 aa). Residues 247-544 are catalytic; it reads DHRKLGREMN…LIENFAGKLP (298 aa). The Zn(2+) site is built by Cys344, His395, and His521.

Belongs to the class-II aminoacyl-tRNA synthetase family. Homodimer. Zn(2+) is required as a cofactor.

It is found in the cytoplasm. The enzyme catalyses tRNA(Thr) + L-threonine + ATP = L-threonyl-tRNA(Thr) + AMP + diphosphate + H(+). Catalyzes the attachment of threonine to tRNA(Thr) in a two-step reaction: L-threonine is first activated by ATP to form Thr-AMP and then transferred to the acceptor end of tRNA(Thr). Also edits incorrectly charged L-seryl-tRNA(Thr). The polypeptide is Threonine--tRNA ligase (Dinoroseobacter shibae (strain DSM 16493 / NCIMB 14021 / DFL 12)).